The chain runs to 240 residues: Mediator of RNA polymerase II transcription subunit 19 (240 aa).

Disordered stretches follow at residues 32–58 and 169–240; these read GKTQ…DNSR and QPPK…SGLR. Basic residues-rich tracts occupy residues 170 to 181 and 212 to 224; these read PPKKKNKKHKQS and RKKK…KKSR.

It belongs to the Mediator complex subunit 19 family. In terms of assembly, component of the Mediator complex.

It localises to the nucleus. In terms of biological role, component of the Mediator complex, a coactivator involved in the regulated transcription of nearly all RNA polymerase II-dependent genes. Mediator functions as a bridge to convey information from gene-specific regulatory proteins to the basal RNA polymerase II transcription machinery. Mediator is recruited to promoters by direct interactions with regulatory proteins and serves as a scaffold for the assembly of a functional preinitiation complex with RNA polymerase II and the general transcription factors. The sequence is that of Mediator of RNA polymerase II transcription subunit 19 (med19) from Xenopus laevis (African clawed frog).